The chain runs to 313 residues: Acetaldehyde dehydrogenase 1 (313 aa).

An NAD(+)-binding site is contributed by 16–19; the sequence is SGNI. Cys-131 functions as the Acyl-thioester intermediate in the catalytic mechanism. NAD(+)-binding positions include 162 to 170 and Asn-281; that span reads SAGPGTRAN.

This sequence belongs to the acetaldehyde dehydrogenase family.

It carries out the reaction acetaldehyde + NAD(+) + CoA = acetyl-CoA + NADH + H(+). The sequence is that of Acetaldehyde dehydrogenase 1 from Mycobacterium sp. (strain JLS).